The chain runs to 347 residues: Ceramide very long chain fatty acid hydroxylase scs7 (347 aa).

Residues 1 to 156 (MASVTSEKCV…GNFLEPLTKT (156 aa)) are Cytoplasmic-facing. The helical transmembrane segment at 157–177 (PWYMIPLIWVPCVTYGFLYAC) threads the bilayer. A topological domain (lumenal) is located at residue T178. The helical transmembrane segment at 179–199 (GIPFSVAITFFIIGLFTWTLV) threads the bilayer. At 200–238 (EYTMHRFLFHLDEYTPDHPIFLTMHFAFHGCHHFLPADK) the chain is on the cytoplasmic side. 5 residues coordinate Zn(2+): H204, H209, H228, H231, and H232. A helical transmembrane segment spans residues 239–259 (YRLVMPPALFLIFATPWYHFI). Q260 is a topological domain (lumenal). The chain crosses the membrane as a helical span at residues 261 to 281 (LVLPHYIGVAGFSGAILGYVF). Residues 282-347 (YDLTHYFLHH…EQGKISTKAK (66 aa)) are Cytoplasmic-facing. 5 residues coordinate Zn(2+): H286, H290, H306, H309, and H310.

Belongs to the sterol desaturase family. SCS7 subfamily. It depends on Zn(2+) as a cofactor.

The protein localises to the endoplasmic reticulum membrane. The protein operates within sphingolipid metabolism. Its function is as follows. Ceramide hydroxylase involved in the hydroxylation of sphingolipid-associated very long chain fatty acids. Postulated to hydroxylate the very long chain fatty acid of dihydroceramides and phytoceramides at C-2. The chain is Ceramide very long chain fatty acid hydroxylase scs7 from Schizosaccharomyces pombe (strain 972 / ATCC 24843) (Fission yeast).